The following is a 260-amino-acid chain: Indole-3-glycerol phosphate synthase (260 aa).

Belongs to the TrpC family.

It carries out the reaction 1-(2-carboxyphenylamino)-1-deoxy-D-ribulose 5-phosphate + H(+) = (1S,2R)-1-C-(indol-3-yl)glycerol 3-phosphate + CO2 + H2O. Its pathway is amino-acid biosynthesis; L-tryptophan biosynthesis; L-tryptophan from chorismate: step 4/5. The polypeptide is Indole-3-glycerol phosphate synthase (Nocardioides sp. (strain ATCC BAA-499 / JS614)).